Consider the following 259-residue polypeptide: Ubiquinol-cytochrome c reductase complex assembly factor 1 (259 aa).

It belongs to the CBP3 family. As to quaternary structure, interacts with sloth1; the interaction is probably involved in the assembly and stability of the mitochondrial ubiquinol-cytochrome c reductase complex.

The protein resides in the mitochondrion inner membrane. Its function is as follows. Required for the assembly of the ubiquinol-cytochrome c reductase complex (mitochondrial respiratory chain complex III or cytochrome b-c1 complex). May be involved in cytochrome b translation and/or stability. This Drosophila melanogaster (Fruit fly) protein is Ubiquinol-cytochrome c reductase complex assembly factor 1.